A 165-amino-acid polypeptide reads, in one-letter code: Destrin (165 aa).

Position 2 is an N-acetylalanine (A2). S3 is subject to Phosphoserine. Residues 4–153 (GVQVADEVCR…NRTCIAEKLG (150 aa)) enclose the ADF-H domain. Residue K19 is modified to N6-acetyllysine. The Nuclear localization signal motif lies at 30-34 (KKRKK).

It belongs to the actin-binding proteins ADF family. In terms of processing, ISGylated. In terms of tissue distribution, widely expressed. Not found in skeletal muscle.

In terms of biological role, actin-depolymerizing protein. Severs actin filaments (F-actin) and binds to actin monomers (G-actin). Acts in a pH-independent manner. The protein is Destrin (Dstn) of Mus musculus (Mouse).